Reading from the N-terminus, the 337-residue chain is RNA 3'-terminal phosphate cyclase (337 aa).

ATP contacts are provided by residues Gln-101 and 282-285; that span reads HMSD. The Tele-AMP-histidine intermediate role is filled by His-306.

Belongs to the RNA 3'-terminal cyclase family. Type 1 subfamily.

It is found in the cytoplasm. It catalyses the reaction a 3'-end 3'-phospho-ribonucleotide-RNA + ATP = a 3'-end 2',3'-cyclophospho-ribonucleotide-RNA + AMP + diphosphate. In terms of biological role, catalyzes the conversion of 3'-phosphate to a 2',3'-cyclic phosphodiester at the end of RNA. The mechanism of action of the enzyme occurs in 3 steps: (A) adenylation of the enzyme by ATP; (B) transfer of adenylate to an RNA-N3'P to produce RNA-N3'PP5'A; (C) and attack of the adjacent 2'-hydroxyl on the 3'-phosphorus in the diester linkage to produce the cyclic end product. The biological role of this enzyme is unknown but it is likely to function in some aspects of cellular RNA processing. The chain is RNA 3'-terminal phosphate cyclase from Saccharolobus islandicus (strain L.S.2.15 / Lassen #1) (Sulfolobus islandicus).